Consider the following 247-residue polypeptide: Small ribosomal subunit protein uS2 (247 aa).

Belongs to the universal ribosomal protein uS2 family.

This Ralstonia pickettii (strain 12J) protein is Small ribosomal subunit protein uS2.